Here is a 298-residue protein sequence, read N- to C-terminus: (S)-ureidoglycine aminohydrolase (298 aa).

An N-terminal signal peptide occupies residues 1 to 20 (MRSLYLIVFIVISLVKASKS). The Cupin type-2 domain occupies 222–288 (TMDFQPGEFL…ALGKTRSRYL (67 aa)). 4 residues coordinate Mn(2+): Glu235, His237, His241, and Gln275. Residue Glu235 participates in substrate binding. Residues Gln275, Tyr287, and Lys291 each coordinate substrate.

It belongs to the UGHY family. Homooctamer. It depends on Mn(2+) as a cofactor.

Its subcellular location is the endoplasmic reticulum. The enzyme catalyses (S)-2-ureidoglycine + H2O = (S)-ureidoglycolate + NH4(+). In terms of biological role, involved in the catabolism of purine nucleotides. Can use (S)-2-ureidoglycine as substrate, but not allantoate. The sequential activity of AAH, UGLYAH and UAH allows a complete purine breakdown without the intermediate generation of urea. In Arabidopsis thaliana (Mouse-ear cress), this protein is (S)-ureidoglycine aminohydrolase (UGLYAH).